We begin with the raw amino-acid sequence, 200 residues long: Beta-1,6-glucan synthesis-associated protein KEG1 (200 aa).

Topologically, residues 1-15 are lumenal; it reads MAGIKLTHKLYQYYQ. Residues 16–36 traverse the membrane as a helical segment; it reads LATSFLYAALLIRWLILMPLV. The Cytoplasmic portion of the chain corresponds to 37–44; that stretch reads GSRFLPGG. Residues 45-65 form a helical membrane-spanning segment; the sequence is IHEFLIYLMFYSSIMEVIWLL. Residues 66 to 82 are Lumenal-facing; it reads RFHGFKYGLLSRTFLKD. The chain crosses the membrane as a helical span at residues 83 to 103; sequence LNFIYLVSVIHFYDDYEHALI. Residues 104–145 lie on the Cytoplasmic side of the membrane; it reads LKNASYSSFIISLSLSQAYCHWCKLFKRKGVKERTLVWKVNT. A helical transmembrane segment spans residues 146 to 166; it reads FVTLPILYLSEFALLLLNIQV. At 167-173 the chain is on the lumenal side; that stretch reads KNYHSTP. A helical membrane pass occupies residues 174–194; it reads TLDIINRVVLLAYFPVLLTAY. Over 195-200 the chain is Cytoplasmic; the sequence is KKLLTK.

Interacts with KRE6.

It is found in the endoplasmic reticulum membrane. Its function is as follows. Involved in the biosynthesis of (1-&gt;6)-beta-D-glucan polymers of the cell wall. Required for viability. Involved in maintaining chromosome stability. This is Beta-1,6-glucan synthesis-associated protein KEG1 (KEG1) from Saccharomyces cerevisiae (strain ATCC 204508 / S288c) (Baker's yeast).